Consider the following 140-residue polypeptide: Large ribosomal subunit protein bL34m (140 aa).

This sequence belongs to the bacterial ribosomal protein bL34 family. As to quaternary structure, component of the mitochondrial large ribosomal subunit (mt-LSU). Mature N.crassa 74S mitochondrial ribosomes consist of a small (37S) and a large (54S) subunit. The 37S small subunit contains a 16S ribosomal RNA (16S mt-rRNA) and 32 different proteins. The 54S large subunit contains a 23S rRNA (23S mt-rRNA) and 42 different proteins.

It localises to the mitochondrion. Functionally, component of the mitochondrial ribosome (mitoribosome), a dedicated translation machinery responsible for the synthesis of mitochondrial genome-encoded proteins, including at least some of the essential transmembrane subunits of the mitochondrial respiratory chain. The mitoribosomes are attached to the mitochondrial inner membrane and translation products are cotranslationally integrated into the membrane. The chain is Large ribosomal subunit protein bL34m (mrpl34) from Neurospora crassa (strain ATCC 24698 / 74-OR23-1A / CBS 708.71 / DSM 1257 / FGSC 987).